We begin with the raw amino-acid sequence, 765 residues long: E3 ubiquitin-protein ligase SlrP (765 aa).

An interaction with target proteins region spans residues 1 to 453 (MFNITNIQST…YQGPRVLFAM (453 aa)). 10 LRR repeats span residues 200 to 219 (QITT…ENLQ), 221 to 242 (NIKT…LPDT), 243 to 262 (IQEM…RLPS), 263 to 284 (ALQS…LPEE), 285 to 305 (LRYL…LPSE), 306 to 325 (ITHL…TLPP), 326 to 346 (GLKT…SLPP), 347 to 368 (ELQV…LPPT), 369 to 389 (ITTL…LPAA), and 390 to 410 (LQIM…LPHF). The segment at 454–461 (GDFSIVRV) is linker. Residues 462–765 (TRPLHQAVQG…VSSLMSAYWR (304 aa)) form an E3 ubiquitin-protein ligase catalytic domain region. The NEL domain occupies 464-758 (PLHQAVQGWL…NILLKKEVSS (295 aa)). Cys546 serves as the catalytic Glycyl thioester intermediate.

It belongs to the LRR-containing bacterial E3 ligase family. In terms of assembly, interacts with host TXN. In terms of processing, ubiquitinated in the presence of host E1 ubiquitin-activating enzyme, E2 ubiquitin-conjugating enzyme and ubiquitin.

The protein localises to the secreted. It is found in the host cytoplasm. The enzyme catalyses S-ubiquitinyl-[E2 ubiquitin-conjugating enzyme]-L-cysteine + [acceptor protein]-L-lysine = [E2 ubiquitin-conjugating enzyme]-L-cysteine + N(6)-ubiquitinyl-[acceptor protein]-L-lysine.. Functionally, effector proteins function to alter host cell physiology and promote bacterial survival in host tissues. This protein is an E3 ubiquitin ligase that interferes with host's ubiquitination pathway. Can ubiquitinate both ubiquitin and host TXN (thioredoxin). Leads to significant decrease of thioredoxin activity and increase of host cell death. This Salmonella typhimurium (strain 14028s / SGSC 2262) protein is E3 ubiquitin-protein ligase SlrP (slrP).